The following is a 70-amino-acid chain: U2-agatoxin-Ao1a (70 aa).

Residues 1 to 20 (MRAIISLFLISAMVFSMIQA) form the signal peptide. The propeptide occupies 21–34 (VPEEEGLQLSEDER). Cystine bridges form between C37–C53, C44–C58, and C52–C68. The residue at position 69 (L69) is a Leucine amide.

The protein belongs to the neurotoxin 01 (U2-agtx) family. Expressed by the venom gland.

The protein resides in the secreted. In terms of biological role, insect active toxin causing rapid but reversible paralysis in crickets. No activity shown in mammals. Suppresses the excitatory postsynaptic potentials evoked in lobster neuromuscular synaptic preparations, possibly by blocking the presynaptic calcium channel. Induces instantaneous reversible paralysis when injected into crickets. Does not show effect on mammalian Cav2.1/CACNA1A, Cav2.2/CACNA1B and Cav2.3/CACNA1E. This chain is U2-agatoxin-Ao1a, found in Agelena orientalis (Funnel-web spider).